The following is a 322-amino-acid chain: Arginase-1 (322 aa).

Positions 1–27 (MSSKPQSIGVIGAPFSKGQPRGGVEEG) are disordered. A Phosphoserine modification is found at serine 7. At lysine 17 the chain carries N6-succinyllysine. Serine 62 carries the post-translational modification Phosphoserine. N6-succinyllysine is present on lysine 75. Mn(2+) contacts are provided by histidine 101, aspartate 124, histidine 126, and aspartate 128. Substrate is bound by residues 126–130 (HTDIN), 137–139 (TGN), and aspartate 183. Serine 217 is modified (phosphoserine). Residues aspartate 232 and aspartate 234 each contribute to the Mn(2+) site. Substrate contacts are provided by threonine 246 and glutamate 277.

Belongs to the arginase family. In terms of assembly, homotrimer. Interacts with CMTM6. Mn(2+) is required as a cofactor.

The protein localises to the cytoplasm. It carries out the reaction L-arginine + H2O = urea + L-ornithine. Its pathway is nitrogen metabolism; urea cycle; L-ornithine and urea from L-arginine: step 1/1. The polypeptide is Arginase-1 (ARG1) (Bos taurus (Bovine)).